Consider the following 406-residue polypeptide: Olfactomedin-like protein 3 (406 aa).

Positions 1-21 are cleaved as a signal peptide; that stretch reads MGPSAPLLLLFFLSWTGPLQG. Residues 25–101 are a coiled coil; that stretch reads HLVEYMERRL…REVDYLETQN (77 aa). An Olfactomedin-like domain is found at 134–401; that stretch reads DCSYTVAQVR…QIVYKLEMKK (268 aa). Cys-135 and Cys-328 are disulfide-bonded. 2 N-linked (GlcNAc...) asparagine glycosylation sites follow: Asn-177 and Asn-248.

This sequence belongs to the OLFML3 family.

Its subcellular location is the secreted. In terms of biological role, secreted scaffold protein that plays an essential role in dorsoventral patterning during early development. Stabilizes axial formation by restricting chordin (CHRD) activity on the dorsal side. Acts by facilitating the association between the tolloid proteases and their substrate chordin (CHRD), leading to enhance chordin (CHRD) degradation. May have matrix-related function involved in placental and embryonic development, or play a similar role in other physiological processes. The polypeptide is Olfactomedin-like protein 3 (Olfml3) (Mus musculus (Mouse)).